The following is a 119-amino-acid chain: Ribonuclease P protein component (119 aa).

It belongs to the RnpA family. In terms of assembly, consists of a catalytic RNA component (M1 or rnpB) and a protein subunit.

The catalysed reaction is Endonucleolytic cleavage of RNA, removing 5'-extranucleotides from tRNA precursor.. In terms of biological role, RNaseP catalyzes the removal of the 5'-leader sequence from pre-tRNA to produce the mature 5'-terminus. It can also cleave other RNA substrates such as 4.5S RNA. The protein component plays an auxiliary but essential role in vivo by binding to the 5'-leader sequence and broadening the substrate specificity of the ribozyme. The sequence is that of Ribonuclease P protein component from Listeria innocua serovar 6a (strain ATCC BAA-680 / CLIP 11262).